The following is a 272-amino-acid chain: NH(3)-dependent NAD(+) synthetase (272 aa).

Position 45–52 (45–52 (GISGGQDS)) interacts with ATP. Asp-51 contacts Mg(2+). Arg-138 is a binding site for deamido-NAD(+). Thr-158 contributes to the ATP binding site. Residue Glu-163 coordinates Mg(2+). Deamido-NAD(+)-binding residues include Lys-171 and Asp-178. The ATP site is built by Lys-187 and Thr-209. Residue 258 to 259 (HK) participates in deamido-NAD(+) binding.

This sequence belongs to the NAD synthetase family. As to quaternary structure, homodimer.

It catalyses the reaction deamido-NAD(+) + NH4(+) + ATP = AMP + diphosphate + NAD(+) + H(+). It participates in cofactor biosynthesis; NAD(+) biosynthesis; NAD(+) from deamido-NAD(+) (ammonia route): step 1/1. Functionally, catalyzes the ATP-dependent amidation of deamido-NAD to form NAD. Uses ammonia as a nitrogen source. The chain is NH(3)-dependent NAD(+) synthetase from Bacillus cereus (strain Q1).